Consider the following 88-residue polypeptide: Large ribosomal subunit protein bL27 (88 aa).

Residues methionine 1–arginine 25 form a disordered region.

Belongs to the bacterial ribosomal protein bL27 family.

The chain is Large ribosomal subunit protein bL27 from Corynebacterium diphtheriae (strain ATCC 700971 / NCTC 13129 / Biotype gravis).